A 152-amino-acid chain; its full sequence is Deoxyuridine 5'-triphosphate nucleotidohydrolase (152 aa).

Substrate-binding positions include 71 to 73 (RSG), Asn-84, 88 to 90 (LID), and Met-98.

Belongs to the dUTPase family. Mg(2+) is required as a cofactor.

It carries out the reaction dUTP + H2O = dUMP + diphosphate + H(+). Its pathway is pyrimidine metabolism; dUMP biosynthesis; dUMP from dCTP (dUTP route): step 2/2. Functionally, this enzyme is involved in nucleotide metabolism: it produces dUMP, the immediate precursor of thymidine nucleotides and it decreases the intracellular concentration of dUTP so that uracil cannot be incorporated into DNA. The chain is Deoxyuridine 5'-triphosphate nucleotidohydrolase from Shewanella baltica (strain OS155 / ATCC BAA-1091).